A 20-amino-acid chain; its full sequence is Unknown protein NF040 from 2D-PAGE (20 aa).

In terms of domain architecture, TCTP spans 1-20 (MKVYTDIFTRDEFLSDSYPM).

The protein belongs to the TCTP family.

This chain is Unknown protein NF040 from 2D-PAGE, found in Naegleria fowleri (Brain eating amoeba).